Reading from the N-terminus, the 188-residue chain is Elongation factor P (188 aa).

Lysine 34 carries the post-translational modification N6-(3,6-diaminohexanoyl)-5-hydroxylysine.

Belongs to the elongation factor P family. In terms of processing, may be beta-lysylated on the epsilon-amino group of Lys-34 by the combined action of EpmA and EpmB, and then hydroxylated on the C5 position of the same residue by EpmC (if this protein is present). Lysylation is critical for the stimulatory effect of EF-P on peptide-bond formation. The lysylation moiety may extend toward the peptidyltransferase center and stabilize the terminal 3-CCA end of the tRNA. Hydroxylation of the C5 position on Lys-34 may allow additional potential stabilizing hydrogen-bond interactions with the P-tRNA.

It localises to the cytoplasm. It participates in protein biosynthesis; polypeptide chain elongation. Functionally, involved in peptide bond synthesis. Alleviates ribosome stalling that occurs when 3 or more consecutive Pro residues or the sequence PPG is present in a protein, possibly by augmenting the peptidyl transferase activity of the ribosome. Modification of Lys-34 is required for alleviation. The protein is Elongation factor P of Pectobacterium atrosepticum (strain SCRI 1043 / ATCC BAA-672) (Erwinia carotovora subsp. atroseptica).